The primary structure comprises 316 residues: Methionyl-tRNA formyltransferase (316 aa).

Residue serine 109–proline 112 participates in (6S)-5,6,7,8-tetrahydrofolate binding.

Belongs to the Fmt family.

The catalysed reaction is L-methionyl-tRNA(fMet) + (6R)-10-formyltetrahydrofolate = N-formyl-L-methionyl-tRNA(fMet) + (6S)-5,6,7,8-tetrahydrofolate + H(+). In terms of biological role, attaches a formyl group to the free amino group of methionyl-tRNA(fMet). The formyl group appears to play a dual role in the initiator identity of N-formylmethionyl-tRNA by promoting its recognition by IF2 and preventing the misappropriation of this tRNA by the elongation apparatus. This is Methionyl-tRNA formyltransferase from Nitrosomonas eutropha (strain DSM 101675 / C91 / Nm57).